Consider the following 355-residue polypeptide: Protein RecA (355 aa).

Residue 67-74 (GPESSGKT) coordinates ATP.

It belongs to the RecA family.

The protein localises to the cytoplasm. Its function is as follows. Can catalyze the hydrolysis of ATP in the presence of single-stranded DNA, the ATP-dependent uptake of single-stranded DNA by duplex DNA, and the ATP-dependent hybridization of homologous single-stranded DNAs. It interacts with LexA causing its activation and leading to its autocatalytic cleavage. This is Protein RecA from Shewanella amazonensis (strain ATCC BAA-1098 / SB2B).